Reading from the N-terminus, the 315-residue chain is Salivary protein SG34 (315 aa).

A signal peptide spans 1–20 (MPVSYDFVILLALFIVLARS). Positions 98–161 (NAEVELLRES…QEEIEQQTKQ (64 aa)) form a coiled coil.

In terms of biological role, (Microbial infection) Modulates replication of duck Tembusu virus in salivary glands and virus release into the saliva, probably via the regulation of antimicrobial peptides expression in response to duck Tembusu virus infection. This is Salivary protein SG34 from Aedes albopictus (Asian tiger mosquito).